A 159-amino-acid chain; its full sequence is 17 kDa surface antigen (159 aa).

Positions 1-19 (MKIISKIIVILLAASMLQA) are cleaved as a signal peptide. C20 is lipidated: N-palmitoyl cysteine. Residue C20 is the site of S-diacylglycerol cysteine attachment.

Belongs to the rickettsiale 17 kDa surface antigen family.

The protein localises to the cell outer membrane. The chain is 17 kDa surface antigen (omp) from Rickettsia bellii.